Reading from the N-terminus, the 403-residue chain is UPF0229 protein CKR_0568 (403 aa).

Residues 71–109 (SSGVGSGDGSQKKGDRIGKAIKDRDGKGNQGAGNQEGED) are disordered. Positions 80–97 (SQKKGDRIGKAIKDRDGK) are enriched in basic and acidic residues.

The protein belongs to the UPF0229 family.

This is UPF0229 protein CKR_0568 from Clostridium kluyveri (strain NBRC 12016).